Here is a 238-residue protein sequence, read N- to C-terminus: DNA repair protein RecO (238 aa).

This sequence belongs to the RecO family.

Its function is as follows. Involved in DNA repair and RecF pathway recombination. This chain is DNA repair protein RecO, found in Anaplasma marginale (strain St. Maries).